A 687-amino-acid chain; its full sequence is Fatty acid oxidation complex subunit alpha (687 aa).

Residues 1–191 (MKNTSAFAWT…KLGVVDASVP (191 aa)) form an enoyl-CoA hydratase region. Residues 307–687 (KSIDYVGVLG…ADKYGDRFIE (381 aa)) are 3-hydroxyacyl-CoA dehydrogenase.

This sequence in the N-terminal section; belongs to the enoyl-CoA hydratase/isomerase family. It in the central section; belongs to the 3-hydroxyacyl-CoA dehydrogenase family. As to quaternary structure, heterotetramer of two alpha chains (FadJ) and two beta chains (FadI).

The protein localises to the cytoplasm. It carries out the reaction a (3S)-3-hydroxyacyl-CoA = a (2E)-enoyl-CoA + H2O. It catalyses the reaction a 4-saturated-(3S)-3-hydroxyacyl-CoA = a (3E)-enoyl-CoA + H2O. The enzyme catalyses a (3S)-3-hydroxyacyl-CoA + NAD(+) = a 3-oxoacyl-CoA + NADH + H(+). The catalysed reaction is (3S)-3-hydroxybutanoyl-CoA = (3R)-3-hydroxybutanoyl-CoA. The protein operates within lipid metabolism; fatty acid beta-oxidation. In terms of biological role, catalyzes the formation of a hydroxyacyl-CoA by addition of water on enoyl-CoA. Also exhibits 3-hydroxyacyl-CoA epimerase and 3-hydroxyacyl-CoA dehydrogenase activities. This chain is Fatty acid oxidation complex subunit alpha, found in Aliivibrio fischeri (strain ATCC 700601 / ES114) (Vibrio fischeri).